The chain runs to 146 residues: Probable transporter XF_0765 (146 aa).

4 helical membrane-spanning segments follow: residues 9–29 (FTVA…SEMI), 46–66 (NPSL…GMAL), 91–111 (IVFG…CPGP), and 116–136 (LSTG…GMII).

Belongs to the TsuA/YedE (TC 9.B.102) family.

It localises to the cell inner membrane. This Xylella fastidiosa (strain 9a5c) protein is Probable transporter XF_0765.